A 95-amino-acid polypeptide reads, in one-letter code: Co-chaperonin GroES (95 aa).

This sequence belongs to the GroES chaperonin family. In terms of assembly, heptamer of 7 subunits arranged in a ring. Interacts with the chaperonin GroEL.

The protein localises to the cytoplasm. Its function is as follows. Together with the chaperonin GroEL, plays an essential role in assisting protein folding. The GroEL-GroES system forms a nano-cage that allows encapsulation of the non-native substrate proteins and provides a physical environment optimized to promote and accelerate protein folding. GroES binds to the apical surface of the GroEL ring, thereby capping the opening of the GroEL channel. In Pseudoalteromonas translucida (strain TAC 125), this protein is Co-chaperonin GroES.